Here is a 1934-residue protein sequence, read N- to C-terminus: Myosin-7 (1934 aa).

The Myosin N-terminal SH3-like domain occupies 31 to 80 (DLKKDVFVPDDKEEFVKAKIVSREGGKVTAETENGKTVTVKEDQVMQQNP). Residues 84-777 (DKIEDMAMLT…LLGLLEEMRD (694 aa)) form the Myosin motor domain. Position 128 is an N6,N6,N6-trimethyllysine (K128). 177–184 (GESGAGKT) contributes to the ATP binding site. Residue T377 is modified to Phosphothreonine. Actin-binding stretches follow at residues 654-676 (LNKL…IPNE) and 756-770 (KFGH…GLLG). The region spanning 780 to 809 (LSRIITRIQAQSRGLLSRMEFKKLLERRDS) is the IQ domain. Residues 839–1934 (LKSAETEKEM…DIGAKGLNEE (1096 aa)) are a coiled coil. S1136 and S1268 each carry phosphoserine. Residue T1281 is modified to Phosphothreonine. A Phosphotyrosine modification is found at Y1307. The residue at position 1308 (T1308) is a Phosphothreonine. A Phosphoserine modification is found at S1509. The residue at position 1512 (T1512) is a Phosphothreonine. The segment at 1914–1934 (SQVNKLRAKSRDIGAKGLNEE) is disordered. A compositionally biased stretch (basic and acidic residues) spans 1922-1934 (KSRDIGAKGLNEE).

It belongs to the TRAFAC class myosin-kinesin ATPase superfamily. Myosin family. As to quaternary structure, muscle myosin is a hexameric protein that consists of 2 heavy chain subunits (MHC), 2 alkali light chain subunits (MLC) and 2 regulatory light chain subunits (MLC-2). Interacts with ECPAS. Interacts (via C-terminus) with LRRC39.

The protein resides in the cytoplasm. Its subcellular location is the myofibril. The protein localises to the sarcomere. In terms of biological role, myosins are actin-based motor molecules with ATPase activity essential for muscle contraction. Forms regular bipolar thick filaments that, together with actin thin filaments, constitute the fundamental contractile unit of skeletal and cardiac muscle. The chain is Myosin-7 (MYH7) from Mesocricetus auratus (Golden hamster).